Here is a 365-residue protein sequence, read N- to C-terminus: Aminomethyltransferase (365 aa).

It belongs to the GcvT family. As to quaternary structure, the glycine cleavage system is composed of four proteins: P, T, L and H.

The catalysed reaction is N(6)-[(R)-S(8)-aminomethyldihydrolipoyl]-L-lysyl-[protein] + (6S)-5,6,7,8-tetrahydrofolate = N(6)-[(R)-dihydrolipoyl]-L-lysyl-[protein] + (6R)-5,10-methylene-5,6,7,8-tetrahydrofolate + NH4(+). Its function is as follows. The glycine cleavage system catalyzes the degradation of glycine. The protein is Aminomethyltransferase of Pelodictyon phaeoclathratiforme (strain DSM 5477 / BU-1).